The chain runs to 176 residues: Membrane glycoprotein UL144 (176 aa).

The signal sequence occupies residues 1–20 (MKPLIMLICFAVILLQLGVT). TNFR-Cys repeat units lie at residues 22–56 (VCQH…SVTC) and 58–95 (PCPN…NTVC). 6 cysteine pairs are disulfide-bonded: Cys23/Cys34, Cys35/Cys48, Cys38/Cys56, Cys59/Cys71, Cys74/Cys87, and Cys77/Cys95. Residues 134–154 (LAWLSLFIFLVGIILLILYLI) traverse the membrane as a helical segment.

As to quaternary structure, interacts with host TRIM23; this interaction causes auto-ubiquitination of TRAF6, leading to NF-kappaB activation.

The protein resides in the membrane. Activates NF-kappaB in a tumor necrosis factor receptor (TNFR)-associated factor 6 (TRAF6)-dependent manner, causing the up-regulation of the chemokine CCL22. The polypeptide is Membrane glycoprotein UL144 (UL144) (Homo sapiens (Human)).